Reading from the N-terminus, the 66-residue chain is Xenoxin-3 (66 aa).

Disulfide bonds link cysteine 3/cysteine 24, cysteine 17/cysteine 37, cysteine 43/cysteine 58, and cysteine 59/cysteine 64.

In terms of tissue distribution, expressed by the skin dorsal glands.

Its subcellular location is the secreted. Its function is as follows. Lacks alpha-neurotoxic activity, has apparently no antibacterial activity, nor anti-coagulant potency. This chain is Xenoxin-3, found in Xenopus laevis (African clawed frog).